The following is a 100-amino-acid chain: Transcription and mRNA export factor SUS1 (100 aa).

It belongs to the ENY2 family. In terms of assembly, component of the nuclear pore complex (NPC)-associated TREX-2 complex (transcription and export complex 2), composed of at least SUS1, SAC3, THP1, SEM1, and CDC31. TREX-2 contains 2 SUS1 chains. The TREX-2 complex interacts with the nucleoporin NUP1. Component of the 1.8 MDa SAGA transcription coactivator-HAT complex. SAGA is built of 5 distinct domains with specialized functions. Within the SAGA complex, SUS1, SGF11, SGF73 and UBP8 form an additional subcomplex of SAGA called the DUB module (deubiquitination module). Interacts directly with THP1, SAC3, SGF11, and with the RNA polymerase II.

Its subcellular location is the nucleus. It is found in the nucleoplasm. The protein resides in the cytoplasm. The protein localises to the P-body. Functionally, involved in mRNA export coupled transcription activation by association with both the TREX-2 and the SAGA complexes. At the promoters, SAGA is required for recruitment of the basal transcription machinery. It influences RNA polymerase II transcriptional activity through different activities such as TBP interaction and promoter selectivity, interaction with transcription activators, and chromatin modification through histone acetylation and deubiquitination. Within the SAGA complex, participates in a subcomplex required for deubiquitination of H2B and for the maintenance of steady-state H3 methylation levels. The TREX-2 complex functions in docking export-competent ribonucleoprotein particles (mRNPs) to the nuclear entrance of the nuclear pore complex (nuclear basket). TREX-2 participates in mRNA export and accurate chromatin positioning in the nucleus by tethering genes to the nuclear periphery. May also be involved in cytoplasmic mRNA decay by interaction with components of P-bodies. The sequence is that of Transcription and mRNA export factor SUS1 from Cryptococcus neoformans var. neoformans serotype D (strain B-3501A) (Filobasidiella neoformans).